Consider the following 186-residue polypeptide: Phosphoheptose isomerase 1 (186 aa).

The SIS domain maps to 33–186 (LCECLKKGGK…TLCQIIDESF (154 aa)). Position 48-50 (48-50 (NGG)) interacts with substrate. Zn(2+) is bound by residues H57 and E61. Substrate contacts are provided by residues E61, 90–91 (ND), 116–118 (STS), S121, and Q168. 2 residues coordinate Zn(2+): Q168 and H176.

The protein belongs to the SIS family. GmhA subfamily. In terms of assembly, homotetramer. It depends on Zn(2+) as a cofactor.

The protein resides in the cytoplasm. It carries out the reaction 2 D-sedoheptulose 7-phosphate = D-glycero-alpha-D-manno-heptose 7-phosphate + D-glycero-beta-D-manno-heptose 7-phosphate. It participates in carbohydrate biosynthesis; D-glycero-D-manno-heptose 7-phosphate biosynthesis; D-glycero-alpha-D-manno-heptose 7-phosphate and D-glycero-beta-D-manno-heptose 7-phosphate from sedoheptulose 7-phosphate: step 1/1. The protein operates within bacterial outer membrane biogenesis; LOS core biosynthesis. Catalyzes the isomerization of sedoheptulose 7-phosphate in D-glycero-D-manno-heptose 7-phosphate. The chain is Phosphoheptose isomerase 1 (gmhA1) from Campylobacter jejuni subsp. jejuni serotype O:2 (strain ATCC 700819 / NCTC 11168).